We begin with the raw amino-acid sequence, 2772 residues long: Protein DDB_G0276689 (2772 aa).

Disordered stretches follow at residues 50-82 (QQLK…NNNN), 371-415 (NLET…NGKS), 475-514 (LDIN…KNNL), 612-650 (NKNN…NNNE), 685-708 (LRGS…DSSL), and 933-982 (LVNN…NNSN). Low complexity-rich tracts occupy residues 376–412 (NNNN…NNNN), 478–514 (NSKN…KNNL), 614–649 (NNNN…NNNN), and 688–708 (SFSP…DSSL). Residues 1065–1089 (LSKWILNLDDNNYNHIPFMSLVLMP) form an LRR 1 repeat. A disordered region spans residues 1282–1319 (NNNNIDNNNNNNNNNNNNNNNNNNNNNNNNNNNNNNNN). LRR repeat units follow at residues 1393–1416 (LSNL…TPKN) and 1543–1567 (HKDV…SFSN). Low complexity predominate over residues 1587 to 1619 (QNNNYNNNNYNNNYNNNNNNNNNNNNNNNNNNN). The segment at 1587-1622 (QNNNYNNNNYNNNYNNNNNNNNNNNNNNNNNNNIDN) is disordered. Residues 1899–1922 (LEELTKQEIGYQVLLVLPTDLQVE) form an LRR 4 repeat. Composition is skewed to polar residues over residues 1999 to 2011 (YVSN…NDQI) and 2073 to 2083 (LNIVHSTSPNS). Disordered regions lie at residues 1999–2021 (YVSN…KDKK), 2054–2083 (EISN…SPNS), and 2367–2386 (NNSS…NNNN). The LRR 5 repeat unit spans residues 2414 to 2439 (TTIINNIEMDKNRLDEAIYYLKKYGN).

This is Protein DDB_G0276689 from Dictyostelium discoideum (Social amoeba).